The sequence spans 228 residues: Aquaporin Z (228 aa).

The next 2 membrane-spanning stretches (helical) occupy residues 1 to 21 and 23 to 43; these read MLNK…GGCG and AILA…ALAF. The NPA 1 motif lies at 63–65; that stretch reads NPA. Helical transmembrane passes span 82–102, 129–149, and 154–174; these read IPYW…LYVI, MMAG…IILG, and LAPA…IHLV. The NPA 2 signature appears at 184-186; sequence NPA. The helical transmembrane segment at 205-225 threads the bilayer; the sequence is LFWVAPLVGAVIGAIIWKGLL.

Belongs to the MIP/aquaporin (TC 1.A.8) family. Homotetramer.

It is found in the cell inner membrane. It carries out the reaction H2O(in) = H2O(out). In terms of biological role, channel that permits osmotically driven movement of water in both directions. It is involved in the osmoregulation and in the maintenance of cell turgor during volume expansion in rapidly growing cells. It mediates rapid entry or exit of water in response to abrupt changes in osmolarity. This Brucella abortus biovar 1 (strain 9-941) protein is Aquaporin Z.